We begin with the raw amino-acid sequence, 94 residues long: Large ribosomal subunit protein uL23 (94 aa).

The protein belongs to the universal ribosomal protein uL23 family. In terms of assembly, part of the 50S ribosomal subunit. Contacts protein L29, and trigger factor when it is bound to the ribosome.

In terms of biological role, one of the early assembly proteins it binds 23S rRNA. One of the proteins that surrounds the polypeptide exit tunnel on the outside of the ribosome. Forms the main docking site for trigger factor binding to the ribosome. This is Large ribosomal subunit protein uL23 from Latilactobacillus sakei subsp. sakei (strain 23K) (Lactobacillus sakei subsp. sakei).